A 276-amino-acid polypeptide reads, in one-letter code: Large ribosomal subunit protein uL2 (276 aa).

The disordered stretch occupies residues 224–258; sequence VAMNPVDHPHGGGEGRTGEGRVPVSPWGTPTKGYR. The span at 230-242 shows a compositional bias: basic and acidic residues; the sequence is DHPHGGGEGRTGE.

The protein belongs to the universal ribosomal protein uL2 family. As to quaternary structure, part of the 50S ribosomal subunit. Forms a bridge to the 30S subunit in the 70S ribosome.

One of the primary rRNA binding proteins. Required for association of the 30S and 50S subunits to form the 70S ribosome, for tRNA binding and peptide bond formation. It has been suggested to have peptidyltransferase activity; this is somewhat controversial. Makes several contacts with the 16S rRNA in the 70S ribosome. This is Large ribosomal subunit protein uL2 from Polynucleobacter necessarius subsp. necessarius (strain STIR1).